The primary structure comprises 625 residues: UvrABC system protein C (625 aa).

The GIY-YIG domain maps to 13–92 (DKPGVYIMKD…IKKHRPKFNI (80 aa)). In terms of domain architecture, UVR spans 204 to 239 (EDIIKKLEKDMKEAADNLEFERAARIRDKINSLKHI).

The protein belongs to the UvrC family. In terms of assembly, interacts with UvrB in an incision complex.

Its subcellular location is the cytoplasm. In terms of biological role, the UvrABC repair system catalyzes the recognition and processing of DNA lesions. UvrC both incises the 5' and 3' sides of the lesion. The N-terminal half is responsible for the 3' incision and the C-terminal half is responsible for the 5' incision. The protein is UvrABC system protein C of Acetivibrio thermocellus (strain ATCC 27405 / DSM 1237 / JCM 9322 / NBRC 103400 / NCIMB 10682 / NRRL B-4536 / VPI 7372) (Clostridium thermocellum).